The sequence spans 460 residues: Inactive ubiquitin carboxyl-terminal hydrolase MINDY-4B (460 aa).

Positions 41–76 (TNNSTPQNHEGNHTSADENEDGTGLSQPKGQGHLPS) are disordered.

This sequence belongs to the MINDY deubiquitinase family. FAM188 subfamily.

The polypeptide is Inactive ubiquitin carboxyl-terminal hydrolase MINDY-4B (Homo sapiens (Human)).